The following is a 431-amino-acid chain: MSKNVVVIGTQWGDEGKGKIVDWLAESVQGVVRFQGGHNAGHTLWINGKKTILRLIPSGIMHPGVTCFIGNGVVLSPEALLKEIEELEAAGLDVRSRLQISEICPLILPYHIAVDQAREARKGEGKIGTTGRGIGPAYEDKIARRALRVQDLFNPALFDEKLAELLDYHNFVLTQYLGAPAVSAAQVRDQAMALAPAIAPMVKDVSSNLYAMQQAGQRLLFEGAQGALLDVDHGTYPFVTSSNCLAGAASAGAGVGPQSLDYVLGITKAYTTRVGSGPFPTELVDEIGTRLATIGKEFGSVTGRPRRCGWFDGAALKRSVRLNGITGLCITKLDVLDGLESIQLGVGYRVNGEFRDVLPYGAHAVAQAEAVLEELPGWSESTVGITEYAKLPAAARRYLERVAEVCGVPIDLVSTGPDRNETIVLRHPLKG.

GTP contacts are provided by residues 13–19 (GDEGKGK) and 41–43 (GHT). D14 acts as the Proton acceptor in catalysis. Mg(2+) contacts are provided by D14 and G41. Residues 14–17 (DEGK), 39–42 (NAGH), T130, R144, Q225, T240, and R304 each bind IMP. H42 functions as the Proton donor in the catalytic mechanism. 300–306 (SVTGRPR) provides a ligand contact to substrate. Residues R306, 332–334 (KLD), and 414–416 (STG) each bind GTP.

Belongs to the adenylosuccinate synthetase family. As to quaternary structure, homodimer. Requires Mg(2+) as cofactor.

It is found in the cytoplasm. It carries out the reaction IMP + L-aspartate + GTP = N(6)-(1,2-dicarboxyethyl)-AMP + GDP + phosphate + 2 H(+). The protein operates within purine metabolism; AMP biosynthesis via de novo pathway; AMP from IMP: step 1/2. Plays an important role in the de novo pathway of purine nucleotide biosynthesis. Catalyzes the first committed step in the biosynthesis of AMP from IMP. The chain is Adenylosuccinate synthetase from Bordetella petrii (strain ATCC BAA-461 / DSM 12804 / CCUG 43448).